Reading from the N-terminus, the 427-residue chain is Inward rectifier potassium channel 2 (427 aa).

The Cytoplasmic portion of the chain corresponds to methionine 1–tryptophan 81. Cysteine 76 carries the post-translational modification S-nitrosocysteine. A helical transmembrane segment spans residues arginine 82–isoleucine 106. The Extracellular segment spans residues alanine 107–serine 128. Residues phenylalanine 129 to glutamine 140 constitute an intramembrane region (helical; Pore-forming). The pore-forming intramembrane region spans threonine 141–phenylalanine 147. Positions threonine 142–phenylalanine 147 match the Selectivity filter motif. At arginine 148–valine 156 the chain is on the extracellular side. Residues alanine 157–alanine 178 traverse the membrane as a helical segment. Over valine 179–isoleucine 427 the chain is Cytoplasmic. Residues alanine 181 to leucine 208 are polyphosphoinositide (PIP2)-binding. Residues serine 384–isoleucine 427 are disordered. The PDZ-binding signature appears at serine 425–isoleucine 427.

The protein belongs to the inward rectifier-type potassium channel (TC 1.A.2.1) family. KCNJ2 subfamily. As to quaternary structure, homotetramer. Homomultimeric and heteromultimeric association with KCNJ4/Kir2.3. Can form heteromeric channels with Kir2.6/KCNJ18. Associates, via its PDZ-recognition domain, with a complex containing LIN7A, LIN7B, LIN7C, DLG1, CASK and APBA1. S-nitrosylation increases the open probability and inward rectifying currents. As to expression, highly expressed in the ventricle and skeletal muscle, moderately in cerebrum and cerebellum. Only low levels are detected in kidney or lung.

It localises to the cell membrane. It is found in the sarcolemma. Its subcellular location is the T-tubule. It carries out the reaction K(+)(in) = K(+)(out). With respect to regulation, activated by phosphatidylinositol 4,5 biphosphate (PtdIns(4,5)P2). In terms of biological role, inward rectifier potassium channels are characterized by a greater tendency to allow potassium to flow into the cell rather than out of it. Their voltage dependence is regulated by the concentration of extracellular potassium; as external potassium is raised, the voltage range of the channel opening shifts to more positive voltages. The inward rectification is mainly due to the blockage of outward current by internal magnesium. Can be blocked by extracellular barium and cesium. Probably participates in establishing action potential waveform and excitability of neuronal and muscle tissues. The protein is Inward rectifier potassium channel 2 (KCNJ2) of Oryctolagus cuniculus (Rabbit).